The sequence spans 591 residues: Mono(ADP-ribosyl)transferase SpvB (591 aa).

Residues 373-576 (PMMGGNSSRP…LRLSDDATAD (204 aa)) form the TR mART core domain. NAD(+) is bound by residues Arg414 and 471-477 (RGLKLDK). Residues Arg471, Ser501, and Glu538 contribute to the active site. Residue Glu538 coordinates NAD(+).

It belongs to the SpvB family.

Its subcellular location is the secreted. The enzyme catalyses L-arginyl-[protein] + NAD(+) = N(omega)-(ADP-D-ribosyl)-L-arginyl-[protein] + nicotinamide + H(+). With respect to regulation, inhibited by novobiocin. Functionally, mono-ADP-ribosylates eukaryotic muscle and non-muscle actin on 'Arg-177'. ADP-ribosylates all actins tested, has more activity on nonmuscle beta/gamma-actin than on muscle alpha-actin. Prefers monomeric G-actin but can weakly ADP-ribosylate F-actin. ADP-ribosylation prevents the polymerization of G-actin to F-actin, causing actin filament depolymerization, destruction of the cytoskeleton and cytotoxicity. Does not possess NAD(+)-glycohydrolase activity, unlike most mART enzymes. This is Mono(ADP-ribosyl)transferase SpvB (spvB) from Salmonella typhimurium.